The sequence spans 176 residues: Endothelin-2 (176 aa).

Positions 1–22 (MVSPAWCSIALALLLALHEGKG) are cleaved as a signal peptide. Residues 23-44 (QAAATMEQPASAPKGRGPHLRF) constitute a propeptide that is removed on maturation. 2 disulfide bridges follow: cysteine 47/cysteine 61 and cysteine 49/cysteine 57. A propeptide spanning residues 68–176 (VNTAGQTAPY…IPAHSRRRKR (109 aa)) is cleaved from the precursor. The tract at residues 94-109 (CECSSAGDSACATFCH) is endothelin-like.

This sequence belongs to the endothelin/sarafotoxin family.

It is found in the secreted. Functionally, vasoconstrictor. The sequence is that of Endothelin-2 (Edn2) from Rattus norvegicus (Rat).